A 252-amino-acid polypeptide reads, in one-letter code: Hydroxyacylglutathione hydrolase (252 aa).

Zn(2+) contacts are provided by histidine 54, histidine 56, aspartate 58, histidine 59, histidine 111, aspartate 128, and histidine 166.

The protein belongs to the metallo-beta-lactamase superfamily. Glyoxalase II family. In terms of assembly, monomer. It depends on Zn(2+) as a cofactor.

The catalysed reaction is an S-(2-hydroxyacyl)glutathione + H2O = a 2-hydroxy carboxylate + glutathione + H(+). It functions in the pathway secondary metabolite metabolism; methylglyoxal degradation; (R)-lactate from methylglyoxal: step 2/2. Its function is as follows. Thiolesterase that catalyzes the hydrolysis of S-D-lactoyl-glutathione to form glutathione and D-lactic acid. The sequence is that of Hydroxyacylglutathione hydrolase from Aliivibrio salmonicida (strain LFI1238) (Vibrio salmonicida (strain LFI1238)).